Here is a 458-residue protein sequence, read N- to C-terminus: Phosphoglucosamine mutase (458 aa).

Ser-106 functions as the Phosphoserine intermediate in the catalytic mechanism. Residues Ser-106, Asp-247, Asp-249, and Asp-251 each coordinate Mg(2+). Ser-106 bears the Phosphoserine mark.

The protein belongs to the phosphohexose mutase family. Requires Mg(2+) as cofactor. In terms of processing, activated by phosphorylation.

It catalyses the reaction alpha-D-glucosamine 1-phosphate = D-glucosamine 6-phosphate. Its function is as follows. Catalyzes the conversion of glucosamine-6-phosphate to glucosamine-1-phosphate. This chain is Phosphoglucosamine mutase, found in Chlamydia caviae (strain ATCC VR-813 / DSM 19441 / 03DC25 / GPIC) (Chlamydophila caviae).